Consider the following 617-residue polypeptide: Chaperone protein HscA homolog (617 aa).

This sequence belongs to the heat shock protein 70 family.

Functionally, chaperone involved in the maturation of iron-sulfur cluster-containing proteins. Has a low intrinsic ATPase activity which is markedly stimulated by HscB. In Photobacterium profundum (strain SS9), this protein is Chaperone protein HscA homolog.